Here is a 439-residue protein sequence, read N- to C-terminus: Proline--tRNA ligase (439 aa).

The protein belongs to the class-II aminoacyl-tRNA synthetase family. ProS type 2 subfamily. Homodimer.

It localises to the cytoplasm. It catalyses the reaction tRNA(Pro) + L-proline + ATP = L-prolyl-tRNA(Pro) + AMP + diphosphate. Its function is as follows. Catalyzes the attachment of proline to tRNA(Pro) in a two-step reaction: proline is first activated by ATP to form Pro-AMP and then transferred to the acceptor end of tRNA(Pro). The polypeptide is Proline--tRNA ligase (Rhodopseudomonas palustris (strain BisB18)).